Here is a 428-residue protein sequence, read N- to C-terminus: Type II methyltransferase M.TthHB8I (428 aa).

The disordered stretch occupies residues 407–428 (RKGNTERRKHGPYTSPESAGSF).

This sequence belongs to the N(4)/N(6)-methyltransferase family.

The enzyme catalyses a 2'-deoxyadenosine in DNA + S-adenosyl-L-methionine = an N(6)-methyl-2'-deoxyadenosine in DNA + S-adenosyl-L-homocysteine + H(+). Functionally, a gamma subtype methylase, recognizes the double-stranded sequence 5'-TCGA-3', methylates A-4 on both strands and protects the DNA from cleavage by the TthHB8I endonuclease. This chain is Type II methyltransferase M.TthHB8I, found in Thermus thermophilus (strain ATCC 27634 / DSM 579 / HB8).